The sequence spans 435 residues: UDP-N-acetylmuramate--L-alanine ligase (435 aa).

108–114 (GSHGKTS) is an ATP binding site.

It belongs to the MurCDEF family.

It is found in the cytoplasm. It catalyses the reaction UDP-N-acetyl-alpha-D-muramate + L-alanine + ATP = UDP-N-acetyl-alpha-D-muramoyl-L-alanine + ADP + phosphate + H(+). It functions in the pathway cell wall biogenesis; peptidoglycan biosynthesis. In terms of biological role, cell wall formation. The sequence is that of UDP-N-acetylmuramate--L-alanine ligase from Exiguobacterium sp. (strain ATCC BAA-1283 / AT1b).